The chain runs to 830 residues: P-selectin (830 aa).

The signal sequence occupies residues Met-1 to Ala-41. Topologically, residues Trp-42–Ala-771 are extracellular. N-linked (GlcNAc...) asparagine glycosylation is found at Asn-54 and Asn-98. The C-type lectin domain maps to Lys-58–Cys-158. Intrachain disulfides connect Cys-60/Cys-158, Cys-131/Cys-150, Cys-163/Cys-174, Cys-168/Cys-183, Cys-185/Cys-194, Cys-200/Cys-244, Cys-230/Cys-257, Cys-262/Cys-306, Cys-292/Cys-319, Cys-324/Cys-368, Cys-354/Cys-381, Cys-386/Cys-430, Cys-416/Cys-443, Cys-448/Cys-492, Cys-478/Cys-505, Cys-510/Cys-554, Cys-540/Cys-567, Cys-572/Cys-616, Cys-602/Cys-629, Cys-642/Cys-686, Cys-672/Cys-699, Cys-704/Cys-748, and Cys-734/Cys-761. The Ca(2+) site is built by Glu-121, Asn-123, and Asn-124. An a carbohydrate-binding site is contributed by Asn-123. A carbohydrate-binding residues include Glu-133 and Asn-146. Positions 146 and 147 each coordinate Ca(2+). The EGF-like domain maps to Tyr-159–Glu-195. The N-linked (GlcNAc...) asparagine glycan is linked to Asn-180. Sushi domains lie at Arg-198–Ala-259, Ala-260–Ala-321, Val-322–Ala-383, Ile-384–Ala-445, Leu-446–Ala-507, Ile-508–Ala-569, Ile-570–Gly-631, Val-640–Ala-701, and Val-702–Ala-763. 2 N-linked (GlcNAc...) asparagine glycosylation sites follow: Asn-212 and Asn-219. Residue Asn-411 is glycosylated (N-linked (GlcNAc...) asparagine). N-linked (GlcNAc...) asparagine glycosylation occurs at Asn-460. Asn-518 carries N-linked (GlcNAc...) asparagine glycosylation. Asn-665 is a glycosylation site (N-linked (GlcNAc...) asparagine). 3 N-linked (GlcNAc...) asparagine glycosylation sites follow: Asn-716, Asn-723, and Asn-741. The chain crosses the membrane as a helical span at residues Leu-772 to Leu-795. At Arg-796–Pro-830 the chain is on the cytoplasmic side. Cys-807 is lipidated: S-palmitoyl cysteine; alternate. Cys-807 carries S-stearoyl cysteine; alternate lipidation. The short motif at Tyr-818 to Phe-821 is the Endocytosis signal element. The segment at Phe-821–Pro-830 is interaction with SNX17.

Belongs to the selectin/LECAM family. Interacts with SNX17. Interacts with SELPLG/PSGL1 and PODXL2 and mediates neutrophil adhesion and leukocyte rolling. This interaction requires the sialyl-Lewis X epitope of SELPLG and PODXL2, and specific tyrosine sulfation on SELPLG. Interacts (via C-type lectin domain) with alpha-IIb/beta3 integrin ITGA2B:ITGB3 and alpha-V/beta-3 integrin ITGAV:ITGB3. Interacts with alpha5/beta1 integrin ITGA5:ITGB1 and alpha4/beta1 integrin ITGA4:ITGB. Stored in the alpha-granules of platelets and Weibel-Palade bodies of endothelial cells. Upon cell activation by agonists, P-selectin is transported rapidly to the cell surface.

Its subcellular location is the cell membrane. Ca(2+)-dependent receptor for myeloid cells that binds to carbohydrates on neutrophils and monocytes. Mediates the interaction of activated endothelial cells or platelets with leukocytes. The ligand recognized is sialyl-Lewis X. Mediates rapid rolling of leukocyte rolling over vascular surfaces during the initial steps in inflammation through interaction with SELPLG. Mediates cell-cell interactions and cell adhesion via the interaction with integrin alpha-IIb/beta3 (ITGA2B:ITGB3) and integrin alpha-V/beta-3 (ITGAV:ITGB3). This is P-selectin (SELP) from Homo sapiens (Human).